The sequence spans 119 residues: Large ribosomal subunit protein uL18 (119 aa).

The tract at residues 1-22 is disordered; sequence MGHVEKVARRHKIKTRSKARGQ. Over residues 8–19 the composition is skewed to basic residues; that stretch reads ARRHKIKTRSKA.

Belongs to the universal ribosomal protein uL18 family. In terms of assembly, part of the 50S ribosomal subunit; part of the 5S rRNA/L5/L18/L25 subcomplex. Contacts the 5S and 23S rRNAs.

In terms of biological role, this is one of the proteins that bind and probably mediate the attachment of the 5S RNA into the large ribosomal subunit, where it forms part of the central protuberance. The chain is Large ribosomal subunit protein uL18 from Chlorobium phaeobacteroides (strain BS1).